A 312-amino-acid chain; its full sequence is Olfactory receptor 2H2 (312 aa).

Over 1 to 23 the chain is Extracellular; it reads MVNQSSTPGFLLLGFSEHPGLER. N-linked (GlcNAc...) asparagine glycosylation occurs at asparagine 3. The chain crosses the membrane as a helical span at residues 24 to 47; it reads TLFVVVLTSYLLTLVGNTLIILLS. Residues 48 to 55 are Cytoplasmic-facing; the sequence is ALDPKLHS. The chain crosses the membrane as a helical span at residues 56-77; sequence PMYFFLSNLSFLDLCFTTSCVP. The Extracellular segment spans residues 78-98; that stretch reads QMLVNLWGPKKTISFLDCSVQ. Cysteine 95 and cysteine 187 are joined by a disulfide. The helical transmembrane segment at 99–118 threads the bilayer; it reads IFIFLSLGTTECILLTVMAF. Residues 119-137 lie on the Cytoplasmic side of the membrane; it reads DRYVAVCQPLHYATIIHPR. Residues 138–156 form a helical membrane-spanning segment; sequence LCWQLASVAWVIGLVESVV. The Extracellular segment spans residues 157 to 193; sequence QTPSTLHLPFCPDRQVDDFVCEVPALIRLSCEDTSYN. Residues 194-217 traverse the membrane as a helical segment; sequence EIQVAVASVFILVVPLSLILVSYG. The Cytoplasmic portion of the chain corresponds to 218–234; it reads AITWAVLRINSAKGRRK. The helical transmembrane segment at 235–257 threads the bilayer; the sequence is AFGTCSSHLTVVTLFYSSVIAVY. Residues 258-270 lie on the Extracellular side of the membrane; it reads LQPKNPYAQERGK. The chain crosses the membrane as a helical span at residues 271–290; that stretch reads FFGLFYAVGTPSLNPLIYTL. Residues 291 to 312 are Cytoplasmic-facing; sequence RNKEVTRAFRRLLGKEMGLTQS.

It belongs to the G-protein coupled receptor 1 family.

It is found in the cell membrane. In terms of biological role, odorant receptor. The sequence is that of Olfactory receptor 2H2 (OR2H2) from Homo sapiens (Human).